The sequence spans 254 residues: uncharacterized protein (254 aa).

The 234-residue stretch at 6 to 239 (LSVDGVEFAY…NIKAVYGVDA (234 aa)) folds into the ABC transporter domain. An ATP-binding site is contributed by 38 to 45 (GVNGAGKS).

Belongs to the ABC transporter superfamily.

This is an uncharacterized protein from Methanocaldococcus jannaschii (strain ATCC 43067 / DSM 2661 / JAL-1 / JCM 10045 / NBRC 100440) (Methanococcus jannaschii).